A 731-amino-acid chain; its full sequence is Catalase-peroxidase (731 aa).

Residues 1–23 (MSDLKCPFSGHTGAVTPAGNTNN) are disordered. The tryptophyl-tyrosyl-methioninium (Trp-Tyr) (with M-244) cross-link spans 95–218 (WHSAGTYRTG…LAAVEMGLIY (124 aa)). The active-site Proton acceptor is H96. The tryptophyl-tyrosyl-methioninium (Tyr-Met) (with W-95) cross-link spans 218-244 (YVNPEGPHGEPDPVASGRDVRETFARM). Heme b is bound at residue H259.

Belongs to the peroxidase family. Peroxidase/catalase subfamily. As to quaternary structure, homodimer or homotetramer. The cofactor is heme b. Post-translationally, formation of the three residue Trp-Tyr-Met cross-link is important for the catalase, but not the peroxidase activity of the enzyme.

It carries out the reaction H2O2 + AH2 = A + 2 H2O. The enzyme catalyses 2 H2O2 = O2 + 2 H2O. Bifunctional enzyme with both catalase and broad-spectrum peroxidase activity. The protein is Catalase-peroxidase of Synechococcus sp. (strain WH7803).